The primary structure comprises 876 residues: Xylosyltransferase oxt (876 aa).

At 1-14 (MEQSVSARWLKRYR) the chain is on the cytoplasmic side. Residues 15–35 (AFFLILLLIVAIQLFLAYKSL) traverse the membrane as a helical; Signal-anchor for type II membrane protein segment. At 36–876 (DIVGGGSGSG…PKSDVDALLK (841 aa)) the chain is on the lumenal side. Residues 48-67 (AAEAPASPPPPHAQARVQPP) form a disordered region. Disulfide bonds link cysteine 83–cysteine 111, cysteine 127–cysteine 465, cysteine 484–cysteine 497, and cysteine 486–cysteine 495. N-linked (GlcNAc...) asparagine glycans are attached at residues asparagine 131 and asparagine 135. In terms of domain architecture, WSC spans 134 to 228 (ANVSLGCFKD…FYAMNIYETG (95 aa)). UDP-alpha-D-xylose-binding positions include aspartate 283 and 312-314 (TIW). N-linked (GlcNAc...) asparagine glycosylation occurs at asparagine 342. Residue 415 to 416 (DW) participates in UDP-alpha-D-xylose binding. UDP-alpha-D-xylose contacts are provided by residues serine 498 and 522–523 (RK). N-linked (GlcNAc...) asparagine glycosylation is found at asparagine 696 and asparagine 725. An intrachain disulfide couples cysteine 842 to cysteine 855.

This sequence belongs to the glycosyltransferase 14 family. XylT subfamily. Ca(2+) is required as a cofactor. Requires Mn(2+) as cofactor. The cofactor is Mg(2+).

It localises to the endoplasmic reticulum membrane. The protein resides in the golgi apparatus membrane. The enzyme catalyses UDP-alpha-D-xylose + L-seryl-[protein] = 3-O-(beta-D-xylosyl)-L-seryl-[protein] + UDP + H(+). It functions in the pathway glycan metabolism; chondroitin sulfate biosynthesis. Its pathway is glycan metabolism; heparan sulfate biosynthesis. Catalyzes the first step in biosynthesis of glycosaminoglycan. Transfers D-xylose from UDP-D-xylose to specific serine residues of the core protein. In Drosophila melanogaster (Fruit fly), this protein is Xylosyltransferase oxt.